The chain runs to 662 residues: Transmembrane 9 superfamily member 2 (662 aa).

The N-terminal stretch at 1–28 (MSSRPPASPPAQGSRLLLLSLLLLGTVP) is a signal peptide. Residues 29–299 (GPRPGSAFYL…LESMPHTHIQ (271 aa)) are Lumenal-facing. A helical transmembrane segment spans residues 300-320 (WFSIMNSLVIVLFLSGMVAMI). Over 321-373 (MLRTLHKDIARYNQMDSTEDAQEEFGWKLVHGDIFRPPRKGMLLSVFLGSGTQ) the chain is Cytoplasmic. A helical membrane pass occupies residues 374–394 (ILIMTFVTLFFACLGFLSPAN). Residues 395-397 (RGA) are Lumenal-facing. Residues 398-418 (LMTCAVVLWVLLGTPAGYVAA) traverse the membrane as a helical segment. The Cytoplasmic segment spans residues 419 to 436 (RFYKSFGGEKWKTNVLLT). A helical transmembrane segment spans residues 437–457 (SFLCPGIVFADFFIMNLILWG). Residues 458–465 (EGSSAAIP) are Lumenal-facing. A helical transmembrane segment spans residues 466–486 (FGTLVAILALWFCISVPLTFI). At 487–521 (GAYFGFKKNAIEHPVRTNQIPRQIPEQSFYTKPLP) the chain is on the cytoplasmic side. A helical membrane pass occupies residues 522–542 (GIIMGGILPFGCIFIQLFFIL). The Lumenal portion of the chain corresponds to 543-553 (NSIWSHQMYYM). A helical transmembrane segment spans residues 554–574 (FGFLFLVFIILVITCSEATIL). Over 575-590 (LCYFHLCAEDYHWQWR) the chain is Cytoplasmic. Residues 591–611 (SFLTSGFTAVYFLIYAIHYFF) traverse the membrane as a helical segment. The Lumenal portion of the chain corresponds to 612–630 (SKLQITGTASTILYFGYTM). Residues 631–651 (IMVLIFFLFTGTIGFFACFWF) traverse the membrane as a helical segment. The Cytoplasmic portion of the chain corresponds to 652–662 (VTKIYSVVKVD).

It belongs to the nonaspanin (TM9SF) (TC 9.A.2) family.

It is found in the endosome membrane. It localises to the golgi outpost. Its subcellular location is the cytoplasm. The protein resides in the cytoskeleton. The protein localises to the microtubule organizing center. Functionally, in the intracellular compartments, may function as a channel or small molecule transporter. The chain is Transmembrane 9 superfamily member 2 (Tm9sf2) from Mus musculus (Mouse).